Reading from the N-terminus, the 699-residue chain is Receptor-type tyrosine-protein phosphatase epsilon (699 aa).

Positions 1–19 are cleaved as a signal peptide; it reads MEPFCPLLLASFSLSLARA. Low complexity predominate over residues 20–36; the sequence is GQGNDTTPTESNWTSTT. A disordered region spans residues 20–40; it reads GQGNDTTPTESNWTSTTAGPP. At 20–45 the chain is on the extracellular side; sequence GQGNDTTPTESNWTSTTAGPPDPGAS. 2 N-linked (GlcNAc...) asparagine glycosylation sites follow: asparagine 23 and asparagine 31. Residues 46-68 traverse the membrane as a helical segment; that stretch reads QPLLTWLLLPLLLLLFLLAAYFF. At 69–699 the chain is on the cytoplasmic side; the sequence is RFRKQRKAVV…DIFSDYANFK (631 aa). Tyrosine-protein phosphatase domains are found at residues 134–393 and 425–688; these read FREE…LLEY and LEEE…VQDF. Residues aspartate 302, 334–340, and glutamine 378 contribute to the substrate site; that span reads CSAGVGR. The active-site Phosphocysteine intermediate is the cysteine 334. Cysteine 629 acts as the Phosphocysteine intermediate in catalysis. Tyrosine 695 is modified (phosphotyrosine).

The protein belongs to the protein-tyrosine phosphatase family. Receptor class 4 subfamily. In terms of assembly, monomer. Isoform 2: Homodimer. Can form oligomers. Dimerization is increased by oxidative stress and decreased by EGFR. Isoform 2 interacts with GRB2. Post-translationally, a catalytically active cytoplasmic form (p65) is produced by proteolytic cleavage of either isoform 1, isoform 2 or isoform 3. In terms of processing, phosphorylated on tyrosine residues by tyrosine kinase Neu. Glycosylated. As to expression, isoform 2 is expressed in the spleen and thymus (at protein level). Detected in fibroblasts, myeloid cells, macrophages, and T-cells but not in B-cell lines. Isoform 1 and isoform 2 are expressed predominantly in the brain, testes, and lungs, with lower levels present in lymph nodes, thymus, spleen, heart and mammary glands. Isoform 1 is expressed in osteoclasts and not in osteoblasts and its expression is related to osteoclast differentiation. It is also expressed in the erythrocytes. Isoform 2 is strongly expressed in skeletal muscle and L6 skeletal muscle cell line.

It is found in the cell membrane. It localises to the cytoplasm. It carries out the reaction O-phospho-L-tyrosyl-[protein] + H2O = L-tyrosyl-[protein] + phosphate. Inhibited by alendronate (ALN), orthovanadate, and phenylarsine oxide (PAO). In terms of biological role, acts as a negative regulator of insulin receptor (IR) signaling and is involved in insulin-induced glucose metabolism mainly through direct dephosphorylation and inactivation of IR in hepatocytes and liver. Plays a critical role in signaling transduction pathways and phosphoprotein network topology in red blood cells. May play a role in osteoclast formation and function. Acts as a negative regulator of insulin receptor (IR) signaling in skeletal muscle. Regulates insulin-induced tyrosine phosphorylation of insulin receptor (IR) and insulin receptor substrate 1 (IRS-1), phosphorylation of protein kinase B and glycogen synthase kinase-3 and insulin induced stimulation of glucose uptake. Its function is as follows. Isoform 1 and isoform 2 act as a negative regulator of FceRI-mediated signal transduction leading to cytokine production and degranulation, most likely by acting at the level of SYK to affect downstream events such as phosphorylation of SLP76 and LAT and mobilization of Ca(2+). The chain is Receptor-type tyrosine-protein phosphatase epsilon (Ptpre) from Mus musculus (Mouse).